A 57-amino-acid polypeptide reads, in one-letter code: Small ribosomal subunit protein bS21 (57 aa).

Belongs to the bacterial ribosomal protein bS21 family.

The protein is Small ribosomal subunit protein bS21 of Lysinibacillus sphaericus (strain C3-41).